We begin with the raw amino-acid sequence, 548 residues long: Hydroxylamine reductase (548 aa).

[4Fe-4S] cluster contacts are provided by Cys-3, Cys-6, Cys-15, and Cys-21. Hybrid [4Fe-2O-2S] cluster is bound by residues His-239, Glu-263, Cys-307, Cys-401, Cys-429, Cys-454, Glu-489, and Lys-491. Cys-401 bears the Cysteine persulfide mark.

This sequence belongs to the HCP family. Requires [4Fe-4S] cluster as cofactor. It depends on hybrid [4Fe-2O-2S] cluster as a cofactor.

Its subcellular location is the cytoplasm. It carries out the reaction A + NH4(+) + H2O = hydroxylamine + AH2 + H(+). Catalyzes the reduction of hydroxylamine to form NH(3) and H(2)O. The protein is Hydroxylamine reductase of Desulfosudis oleivorans (strain DSM 6200 / JCM 39069 / Hxd3) (Desulfococcus oleovorans).